Reading from the N-terminus, the 118-residue chain is Large ribosomal subunit protein bL20 (118 aa).

The protein belongs to the bacterial ribosomal protein bL20 family.

In terms of biological role, binds directly to 23S ribosomal RNA and is necessary for the in vitro assembly process of the 50S ribosomal subunit. It is not involved in the protein synthesizing functions of that subunit. The protein is Large ribosomal subunit protein bL20 of Macrococcus caseolyticus (strain JCSC5402) (Macrococcoides caseolyticum).